A 114-amino-acid polypeptide reads, in one-letter code: Class I hydrophobin SC16 (114 aa).

Positions 1 to 17 are cleaved as a signal peptide; sequence MRFFATLVLALPALAMA. Disulfide bonds link C33–C93, C40–C87, C41–C74, and C94–C107. An N-linked (GlcNAc...) asparagine glycan is attached at N42.

Belongs to the fungal hydrophobin family. In terms of assembly, self-assembles to form functional amyloid fibrils called rodlets. Self-assembly into fibrillar rodlets occurs spontaneously at hydrophobic:hydrophilic interfaces and the rodlets further associate laterally to form amphipathic monolayers.

The protein localises to the secreted. It localises to the cell wall. Its function is as follows. Aerial growth, conidiation, and dispersal of filamentous fungi in the environment rely upon a capability of their secreting small amphipathic proteins called hydrophobins (HPBs) with low sequence identity. Class I can self-assemble into an outermost layer of rodlet bundles on aerial cell surfaces, conferring cellular hydrophobicity that supports fungal growth, development and dispersal; whereas Class II form highly ordered films at water-air interfaces through intermolecular interactions but contribute nothing to the rodlet structure. The protein is Class I hydrophobin SC16 of Schizophyllum commune (strain H4-8 / FGSC 9210) (Split gill fungus).